The chain runs to 188 residues: Elongation factor P (188 aa).

It belongs to the elongation factor P family.

Its subcellular location is the cytoplasm. Its pathway is protein biosynthesis; polypeptide chain elongation. Functionally, involved in peptide bond synthesis. Stimulates efficient translation and peptide-bond synthesis on native or reconstituted 70S ribosomes in vitro. Probably functions indirectly by altering the affinity of the ribosome for aminoacyl-tRNA, thus increasing their reactivity as acceptors for peptidyl transferase. This is Elongation factor P from Anaplasma marginale (strain St. Maries).